The chain runs to 189 residues: UPF0301 protein Plut_0637 (189 aa).

Belongs to the UPF0301 (AlgH) family.

This Chlorobium luteolum (strain DSM 273 / BCRC 81028 / 2530) (Pelodictyon luteolum) protein is UPF0301 protein Plut_0637.